A 259-amino-acid polypeptide reads, in one-letter code: BTB/POZ domain-containing protein KCTD4 (259 aa).

The BTB domain occupies 33–134; that stretch reads TLMTLNVGGY…EVKSRWEKEQ (102 aa).

This Mus musculus (Mouse) protein is BTB/POZ domain-containing protein KCTD4 (Kctd4).